Consider the following 453-residue polypeptide: uncharacterized protein (453 aa).

This is an uncharacterized protein from Magallana gigas (Pacific oyster).